The primary structure comprises 138 residues: Mu-like prophage FluMu G protein 2 (138 aa).

The protein to phage Mu protein G.

The protein is Mu-like prophage FluMu G protein 2 of Haemophilus influenzae (strain ATCC 51907 / DSM 11121 / KW20 / Rd).